The primary structure comprises 194 residues: Glycerol-3-phosphate acyltransferase (194 aa).

5 helical membrane passes run 4 to 24 (EIVLIIGAYLLGSIPTGLLLA), 78 to 98 (EIWVAATGLAAFLGHVYTVFL), 110 to 130 (LGVFIGISPLSVLAALAIFVF), 137 to 157 (YVSLASITAAAAIPFLVALIE), and 161 to 181 (LLITMSVIIAALVVFKHRENI).

This sequence belongs to the PlsY family. Probably interacts with PlsX.

It is found in the cell inner membrane. The catalysed reaction is an acyl phosphate + sn-glycerol 3-phosphate = a 1-acyl-sn-glycero-3-phosphate + phosphate. It functions in the pathway lipid metabolism; phospholipid metabolism. Catalyzes the transfer of an acyl group from acyl-phosphate (acyl-PO(4)) to glycerol-3-phosphate (G3P) to form lysophosphatidic acid (LPA). This enzyme utilizes acyl-phosphate as fatty acyl donor, but not acyl-CoA or acyl-ACP. The polypeptide is Glycerol-3-phosphate acyltransferase (Geotalea daltonii (strain DSM 22248 / JCM 15807 / FRC-32) (Geobacter daltonii)).